We begin with the raw amino-acid sequence, 223 residues long: UPF0502 protein Shew185_1758 (223 aa).

The protein belongs to the UPF0502 family.

This is UPF0502 protein Shew185_1758 from Shewanella baltica (strain OS185).